The following is an 81-amino-acid chain: Keratin-associated protein 19-3 (81 aa).

Belongs to the KRTAP type 19 family. In terms of assembly, interacts with hair keratins.

In terms of biological role, in the hair cortex, hair keratin intermediate filaments are embedded in an interfilamentous matrix, consisting of hair keratin-associated proteins (KRTAP), which are essential for the formation of a rigid and resistant hair shaft through their extensive disulfide bond cross-linking with abundant cysteine residues of hair keratins. The matrix proteins include the high-sulfur and high-glycine-tyrosine keratins. The chain is Keratin-associated protein 19-3 (KRTAP19-3) from Homo sapiens (Human).